Consider the following 254-residue polypeptide: Leucyl/phenylalanyl-tRNA--protein transferase (254 aa).

This sequence belongs to the L/F-transferase family.

Its subcellular location is the cytoplasm. The catalysed reaction is N-terminal L-lysyl-[protein] + L-leucyl-tRNA(Leu) = N-terminal L-leucyl-L-lysyl-[protein] + tRNA(Leu) + H(+). The enzyme catalyses N-terminal L-arginyl-[protein] + L-leucyl-tRNA(Leu) = N-terminal L-leucyl-L-arginyl-[protein] + tRNA(Leu) + H(+). It carries out the reaction L-phenylalanyl-tRNA(Phe) + an N-terminal L-alpha-aminoacyl-[protein] = an N-terminal L-phenylalanyl-L-alpha-aminoacyl-[protein] + tRNA(Phe). Its function is as follows. Functions in the N-end rule pathway of protein degradation where it conjugates Leu, Phe and, less efficiently, Met from aminoacyl-tRNAs to the N-termini of proteins containing an N-terminal arginine or lysine. This chain is Leucyl/phenylalanyl-tRNA--protein transferase, found in Bordetella bronchiseptica (strain ATCC BAA-588 / NCTC 13252 / RB50) (Alcaligenes bronchisepticus).